A 429-amino-acid polypeptide reads, in one-letter code: Histidine--tRNA ligase (429 aa).

Belongs to the class-II aminoacyl-tRNA synthetase family. In terms of assembly, homodimer.

It localises to the cytoplasm. The catalysed reaction is tRNA(His) + L-histidine + ATP = L-histidyl-tRNA(His) + AMP + diphosphate + H(+). This chain is Histidine--tRNA ligase, found in Pseudomonas fluorescens (strain Pf0-1).